Here is a 429-residue protein sequence, read N- to C-terminus: Ribosomal RNA small subunit methyltransferase B (429 aa).

Residues 254 to 260 (CAAPGGK), Asp277, Asp303, and Asp322 each bind S-adenosyl-L-methionine. The active-site Nucleophile is the Cys375.

The protein belongs to the class I-like SAM-binding methyltransferase superfamily. RsmB/NOP family.

Its subcellular location is the cytoplasm. The enzyme catalyses cytidine(967) in 16S rRNA + S-adenosyl-L-methionine = 5-methylcytidine(967) in 16S rRNA + S-adenosyl-L-homocysteine + H(+). Its function is as follows. Specifically methylates the cytosine at position 967 (m5C967) of 16S rRNA. This chain is Ribosomal RNA small subunit methyltransferase B, found in Escherichia fergusonii (strain ATCC 35469 / DSM 13698 / CCUG 18766 / IAM 14443 / JCM 21226 / LMG 7866 / NBRC 102419 / NCTC 12128 / CDC 0568-73).